A 152-amino-acid chain; its full sequence is Deoxyuridine 5'-triphosphate nucleotidohydrolase (152 aa).

Substrate contacts are provided by residues 71–73 (RSG), Asn84, 88–90 (LID), and Met98.

It belongs to the dUTPase family. Mg(2+) is required as a cofactor.

The catalysed reaction is dUTP + H2O = dUMP + diphosphate + H(+). Its pathway is pyrimidine metabolism; dUMP biosynthesis; dUMP from dCTP (dUTP route): step 2/2. Functionally, this enzyme is involved in nucleotide metabolism: it produces dUMP, the immediate precursor of thymidine nucleotides and it decreases the intracellular concentration of dUTP so that uracil cannot be incorporated into DNA. The polypeptide is Deoxyuridine 5'-triphosphate nucleotidohydrolase (Salmonella agona (strain SL483)).